We begin with the raw amino-acid sequence, 4115 residues long: Transcription-associated protein 1 (4115 aa).

Residues 1–11 (MDPSIPSTSHR) are compositionally biased toward polar residues. Disordered stretches follow at residues 1 to 21 (MDPS…GVQP) and 543 to 563 (ESEQ…KKTS). A compositionally biased stretch (basic and acidic residues) spans 544–563 (SEQKRNELPTPTKEHTKKTS). 2 TPR repeats span residues 1341-1374 (LDGL…LLDL) and 1820-1853 (QDYD…EVIP). The segment at 2678–2701 (LEEPEPMEVDQPKNAPAEEPKDNK) is disordered. The 614-residue stretch at 2808–3421 (LIEFISSKHE…SNGASKVSKS (614 aa)) folds into the FAT domain. A TPR 3 repeat occupies 2855–2888 (IETLESLGALYKELAEFDQYSAIWERRSVFPETM). One can recognise a PI3K/PI4K catalytic domain in the interval 3740-4100 (EPYFEIVMRG…CNSLIIRAKD (361 aa)). The interval 3746–3752 (VMRGGQV) is G-loop. Residues 3959–3967 (NLSPMTPHQ) are catalytic loop. The tract at residues 3979-4006 (NPFYRFELGTGQLMDIEHFAHEVPFRLT) is activation loop. The FATC domain maps to 4083-4115 (DAKVKKDDCNSLIIRAKDSDNLSRMPPTYHAWF).

The protein belongs to the PI3/PI4-kinase family. TRA1 subfamily.

It is found in the nucleus. Influences germ cell fate in hermaphrodites. Acts downstream of tra-2 and tra-3 and through the Tip60 histone acetyltransferase complex to regulate germ cell fate decisions. Required for spermatogenesis and embryonic development. Acts with tra-2 to promote expression of fog-3 and control male tail development. Involved in the negative regulation of vulval development. The sequence is that of Transcription-associated protein 1 from Caenorhabditis briggsae.